Here is a 627-residue protein sequence, read N- to C-terminus: Glyco-Gag protein (627 aa).

At 1 to 63 (LGDVPRTSGA…FLLSVWNRSR (63 aa)) the chain is on the cytoplasmic side. The helical transmembrane segment at 64 to 86 (AARLVCCSIVLCCLCLTVFLYLS) threads the bilayer. The Extracellular portion of the chain corresponds to 87–627 (ENMGQTVTTP…PQASLLTLDD (541 aa)). Asparagine 113 carries N-linked (GlcNAc...) asparagine; by host glycosylation. The span at 199–215 (PPSAPSLPPEPPFPTPP) shows a compositional bias: pro residues. 2 disordered regions span residues 199–310 (PPSA…RQGG) and 523–627 (RETP…TLDD). Composition is skewed to basic and acidic residues over residues 523–555 (RETPEEREERIRRETEEKEERRRAEDEQREKER) and 575–608 (RQDRQGGERRRPQLDHDQCAYCKEKGHWARDCPK). The segment at 593–608 (CAYCKEKGHWARDCPK) adopts a CCHC-type zinc-finger fold.

In terms of processing, glycosylated by host. Post-translationally, cleaved by host near the middle of the molecule, releasing the c-terminal half containing capsid and nucleoprotein domains op GAG.

The protein localises to the host cell membrane. Its function is as follows. Plays a role in viral particle release. Presumably acts by facilitating the fission of the virion bud at the cell surface. May prevent the antiviral activity of murine APOBEC3. This Friend murine leukemia virus (isolate 57) (FrMLV) protein is Glyco-Gag protein.